The chain runs to 179 residues: MNATPASADDLIVIGKIYSVHGVRGEVKVYSFTDPIGNLLDYKTWTLRREGSVEKQVELVSGRLQSKFLVVKLKGLDDREEARLLSGYEICVPRNLFPDLDDGEYYWYQLEGLKVIDQLGQLLGKIDHLLETGSNDVMVVKPCAGSLDDRERLLPYTEQCVLAIDMAAGEMKVEWDADF.

The region spanning 102–179 (DGEYYWYQLE…EMKVEWDADF (78 aa)) is the PRC barrel domain.

Belongs to the RimM family. Binds ribosomal protein uS19.

The protein localises to the cytoplasm. Its function is as follows. An accessory protein needed during the final step in the assembly of 30S ribosomal subunit, possibly for assembly of the head region. Essential for efficient processing of 16S rRNA. May be needed both before and after RbfA during the maturation of 16S rRNA. It has affinity for free ribosomal 30S subunits but not for 70S ribosomes. The chain is Ribosome maturation factor RimM from Pseudomonas syringae pv. tomato (strain ATCC BAA-871 / DC3000).